The chain runs to 375 residues: MSSQGNKYEYGELADKLILAYSKRRLFKAIGTKRDRQQQFSRLDNKDKRFISKLIDVSNSNEKHKIPSELDIALDCIDLAKIYEGVDKREYERESKAKDPNLIYEDFIVLELLHYFKHDFFKWVNKPECSRCKQSSNNIVPTGNSGPPSINPSEISIIENYKCTKCNIAVSFPRYNNPIKLLETKSGRCGEWVNCFIFILRALLGSQSQIRYVWNHEDHVWCEYYSLGLKRWIHLDPCEGVFDEPNLYCENWGKKMSWCFAFGETYIMDVSDKYITKSDKQINKLESVSSLKNIKEFIDTLNDDKLVRYYSNMALTASDENRNLMRLYQEVILIHNSEKFNKENKIEVSRTHNIPTGRQTGDAEWTKSRGEDGNE.

C129, C132, C163, and C166 together coordinate Zn(2+). The active-site Nucleophile is C189. Active-site residues include H219 and D236. E239 contributes to the substrate binding site. A disordered region spans residues 345–375 (KIEVSRTHNIPTGRQTGDAEWTKSRGEDGNE). Residues 364–375 (EWTKSRGEDGNE) are compositionally biased toward basic and acidic residues.

This sequence belongs to the transglutaminase-like superfamily. PNGase family. The cofactor is Zn(2+).

The protein localises to the cytoplasm. The catalysed reaction is Hydrolysis of an N(4)-(acetyl-beta-D-glucosaminyl)asparagine residue in which the glucosamine residue may be further glycosylated, to yield a (substituted) N-acetyl-beta-D-glucosaminylamine and a peptide containing an aspartate residue.. Its function is as follows. Specifically deglycosylates the denatured form of N-linked glycoproteins in the cytoplasm and assists their proteasome-mediated degradation. Cleaves the beta-aspartyl-glucosamine (GlcNAc) of the glycan and the amide side chain of Asn, converting Asn to Asp. Prefers proteins containing high-mannose over those bearing complex type oligosaccharides. Can recognize misfolded proteins in the endoplasmic reticulum that are exported to the cytosol to be destroyed and deglycosylate them, while it has no activity toward native proteins. Deglycosylation is a prerequisite for subsequent proteasome-mediated degradation of some, but not all, misfolded glycoproteins. The polypeptide is Peptide-N(4)-(N-acetyl-beta-glucosaminyl)asparagine amidase (PNG1) (Debaryomyces hansenii (strain ATCC 36239 / CBS 767 / BCRC 21394 / JCM 1990 / NBRC 0083 / IGC 2968) (Yeast)).